The sequence spans 217 residues: Probable transaldolase (217 aa).

The active-site Schiff-base intermediate with substrate is lysine 83.

The protein belongs to the transaldolase family. Type 3B subfamily.

The protein resides in the cytoplasm. It carries out the reaction D-sedoheptulose 7-phosphate + D-glyceraldehyde 3-phosphate = D-erythrose 4-phosphate + beta-D-fructose 6-phosphate. The protein operates within carbohydrate degradation; pentose phosphate pathway; D-glyceraldehyde 3-phosphate and beta-D-fructose 6-phosphate from D-ribose 5-phosphate and D-xylulose 5-phosphate (non-oxidative stage): step 2/3. Functionally, transaldolase is important for the balance of metabolites in the pentose-phosphate pathway. This Dinoroseobacter shibae (strain DSM 16493 / NCIMB 14021 / DFL 12) protein is Probable transaldolase.